The following is a 650-amino-acid chain: Aminopeptidase B (650 aa).

Serine 7 is subject to Phosphoserine. 298–302 (GGMEN) is a binding site for substrate. Residue histidine 325 coordinates Zn(2+). Residue glutamate 326 is the Proton acceptor of the active site. Zn(2+) is bound by residues histidine 329 and glutamate 348. Lysine 446 bears the N6-acetyllysine mark.

This sequence belongs to the peptidase M1 family. Monomer. Zn(2+) serves as cofactor. As to expression, widely expressed.

It is found in the secreted. The catalysed reaction is Release of N-terminal Arg and Lys from oligopeptides when P1' is not Pro. Also acts on arylamides of Arg and Lys.. In terms of biological role, exopeptidase which selectively removes arginine and/or lysine residues from the N-terminus of several peptide substrates including Arg(0)-Leu-enkephalin, Arg(0)-Met-enkephalin and Arg(-1)-Lys(0)-somatostatin-14. Can hydrolyze leukotriene A4 (LTA-4) into leukotriene B4 (LTB-4). The protein is Aminopeptidase B (Rnpep) of Rattus norvegicus (Rat).